A 48-amino-acid chain; its full sequence is Large ribosomal subunit protein bL32 (48 aa).

The disordered stretch occupies residues 1-20 (MAVPDRRVSKTRAAKRRTHY). Over residues 9-20 (SKTRAAKRRTHY) the composition is skewed to basic residues.

This sequence belongs to the bacterial ribosomal protein bL32 family.

This chain is Large ribosomal subunit protein bL32, found in Helicobacter acinonychis (strain Sheeba).